A 568-amino-acid polypeptide reads, in one-letter code: C6 finger domain transcription factor BOA13 (568 aa).

A DNA-binding region (zn(2)-C6 fungal-type) is located at residues 14 to 41 (CNECHASKVRCSGERTGCRRCVYNQQKC). 3 disordered regions span residues 92-114 (EANG…EGIT), 207-278 (ATSS…HHNH), and 467-490 (RSRS…FSNP). Residues 242–259 (HSDLSEKQAQHAQNDLRW) show a composition bias toward basic and acidic residues. Polar residues predominate over residues 260–274 (RSQSQSYKRPTISTQ). Positions 470-490 (SLSTPSPRNTPSTSNSPFSNP) are enriched in low complexity.

The protein localises to the nucleus. Transcription factor that probably regulates the gene clusters that mediates the biosynthesis of botcinin acid and its botcinin derivatives, acetate-derived polyketides that contribute to virulence when combined with the sesquiterpene botrydial. Botcinin acid and its derivatives have been shown to induce chlorosis and necrosis during host plant infection, but also have antifungal activities. This chain is C6 finger domain transcription factor BOA13, found in Botryotinia fuckeliana (strain B05.10) (Noble rot fungus).